We begin with the raw amino-acid sequence, 226 residues long: Biosynthetic peptidoglycan transglycosylase (226 aa).

Residues 8–28 (FFGWTWFVMWRFLLLLALLLL) traverse the membrane as a helical segment.

The protein belongs to the glycosyltransferase 51 family.

It is found in the cell inner membrane. It catalyses the reaction [GlcNAc-(1-&gt;4)-Mur2Ac(oyl-L-Ala-gamma-D-Glu-L-Lys-D-Ala-D-Ala)](n)-di-trans,octa-cis-undecaprenyl diphosphate + beta-D-GlcNAc-(1-&gt;4)-Mur2Ac(oyl-L-Ala-gamma-D-Glu-L-Lys-D-Ala-D-Ala)-di-trans,octa-cis-undecaprenyl diphosphate = [GlcNAc-(1-&gt;4)-Mur2Ac(oyl-L-Ala-gamma-D-Glu-L-Lys-D-Ala-D-Ala)](n+1)-di-trans,octa-cis-undecaprenyl diphosphate + di-trans,octa-cis-undecaprenyl diphosphate + H(+). It participates in cell wall biogenesis; peptidoglycan biosynthesis. Peptidoglycan polymerase that catalyzes glycan chain elongation from lipid-linked precursors. This chain is Biosynthetic peptidoglycan transglycosylase, found in Shewanella frigidimarina (strain NCIMB 400).